The following is a 126-amino-acid chain: Protein ApaG (126 aa).

The ApaG domain maps to 2–126 (SALDTSIRVE…FRLATPGLLH (125 aa)).

The protein is Protein ApaG of Shewanella baltica (strain OS223).